Reading from the N-terminus, the 287-residue chain is ATP synthase gamma chain (287 aa).

It belongs to the ATPase gamma chain family. As to quaternary structure, F-type ATPases have 2 components, CF(1) - the catalytic core - and CF(0) - the membrane proton channel. CF(1) has five subunits: alpha(3), beta(3), gamma(1), delta(1), epsilon(1). CF(0) has three main subunits: a, b and c.

It localises to the cell inner membrane. In terms of biological role, produces ATP from ADP in the presence of a proton gradient across the membrane. The gamma chain is believed to be important in regulating ATPase activity and the flow of protons through the CF(0) complex. The protein is ATP synthase gamma chain of Citrobacter koseri (strain ATCC BAA-895 / CDC 4225-83 / SGSC4696).